The sequence spans 156 residues: Putative NrdI-like protein (156 aa).

In Streptococcus pneumoniae (strain ATCC BAA-255 / R6), this protein is Putative NrdI-like protein.